The following is a 329-amino-acid chain: Chlorophyllase-1, chloroplastic (329 aa).

The N-terminal 21 residues, 1-21 (MAAMVDSKPAASVQGTPLLAT), are a transit peptide targeting the chloroplast. A GXSXG motif is present at residues 145–149 (GHSRG). Catalysis depends on Ser147, which acts as the Nucleophile. Catalysis depends on charge relay system residues Asp169 and His242.

The protein belongs to the AB hydrolase superfamily. Lipase family.

It localises to the plastid. Its subcellular location is the chloroplast. The catalysed reaction is a chlorophyll + H2O = a chlorophyllide + phytol + H(+). It functions in the pathway porphyrin-containing compound metabolism; chlorophyll degradation. In terms of biological role, catalyzes the hydrolysis of ester bond in chlorophyll to yield chlorophyllide and phytol. The protein is Chlorophyllase-1, chloroplastic of Citrus unshiu (Satsuma mandarin).